A 132-amino-acid polypeptide reads, in one-letter code: Fluoride-specific ion channel FluC 2 (132 aa).

The next 4 membrane-spanning stretches (helical) occupy residues 12 to 32, 41 to 61, 65 to 85, and 96 to 116; these read LTEL…RWQL, LLVN…PVAP, LLVG…MLAA, and AALG…ALGF. Residues glycine 73 and threonine 76 each coordinate Na(+).

Belongs to the fluoride channel Fluc/FEX (TC 1.A.43) family.

The protein localises to the cell inner membrane. It catalyses the reaction fluoride(in) = fluoride(out). Its activity is regulated as follows. Na(+) is not transported, but it plays an essential structural role and its presence is essential for fluoride channel function. In terms of biological role, fluoride-specific ion channel. Important for reducing fluoride concentration in the cell, thus reducing its toxicity. This Parasynechococcus marenigrum (strain WH8102) protein is Fluoride-specific ion channel FluC 2.